A 206-amino-acid polypeptide reads, in one-letter code: 2,3-bisphosphoglycerate-dependent phosphoglycerate mutase (206 aa).

Residues 9 to 16, 22 to 23, R61, 88 to 91, K99, 115 to 116, and 159 to 160 contribute to the substrate site; these read RHGQSEWN, TG, ERNY, RR, and GN. H10 serves as the catalytic Tele-phosphohistidine intermediate. Catalysis depends on E88, which acts as the Proton donor/acceptor.

The protein belongs to the phosphoglycerate mutase family. BPG-dependent PGAM subfamily. In terms of assembly, homodimer.

It catalyses the reaction (2R)-2-phosphoglycerate = (2R)-3-phosphoglycerate. Its pathway is carbohydrate degradation; glycolysis; pyruvate from D-glyceraldehyde 3-phosphate: step 3/5. Functionally, catalyzes the interconversion of 2-phosphoglycerate and 3-phosphoglycerate. This Bartonella henselae (strain ATCC 49882 / DSM 28221 / CCUG 30454 / Houston 1) (Rochalimaea henselae) protein is 2,3-bisphosphoglycerate-dependent phosphoglycerate mutase.